The sequence spans 242 residues: NADH-quinone oxidoreductase subunit C (242 aa).

An insert region spans residues 67-101 (VVNSVGLGHKEQGAKPITNRRTTSDNVGESKSIDY).

This sequence belongs to the complex I 30 kDa subunit family. NDH-1 is composed of 14 different subunits. Subunits NuoB, C, D, E, F, and G constitute the peripheral sector of the complex.

The protein resides in the cell inner membrane. It catalyses the reaction a quinone + NADH + 5 H(+)(in) = a quinol + NAD(+) + 4 H(+)(out). NDH-1 shuttles electrons from NADH, via FMN and iron-sulfur (Fe-S) centers, to quinones in the respiratory chain. The immediate electron acceptor for the enzyme in this species is believed to be ubiquinone. Couples the redox reaction to proton translocation (for every two electrons transferred, four hydrogen ions are translocated across the cytoplasmic membrane), and thus conserves the redox energy in a proton gradient. This Rickettsia conorii (strain ATCC VR-613 / Malish 7) protein is NADH-quinone oxidoreductase subunit C.